The following is a 212-amino-acid chain: Adenylate kinase (212 aa).

ATP is bound at residue 10-15; that stretch reads GAGKGT. Residues 30–59 form an NMP region; the sequence is STGDMFRAAMANQTEMGVLAKSYIDKGELV. Residues Thr-31, Arg-36, 57–59, 86–89, and Gln-93 each bind AMP; these read ELV and GYPR. Residues 127 to 159 are LID; that stretch reads GRIIHRVTGETFHKVFNPPVDYKEEDYYQREDD. ATP contacts are provided by residues Arg-128 and 137–138; that span reads TF. Arg-156 and Arg-167 together coordinate AMP. Residue Gln-195 participates in ATP binding.

This sequence belongs to the adenylate kinase family. As to quaternary structure, monomer.

The protein localises to the cytoplasm. It catalyses the reaction AMP + ATP = 2 ADP. The protein operates within purine metabolism; AMP biosynthesis via salvage pathway; AMP from ADP: step 1/1. Its function is as follows. Catalyzes the reversible transfer of the terminal phosphate group between ATP and AMP. Plays an important role in cellular energy homeostasis and in adenine nucleotide metabolism. This is Adenylate kinase from Streptococcus pneumoniae (strain JJA).